The sequence spans 714 residues: MVKLAKAGKTHGEAKKMAPPPKEVEEDSEDEEMSEEEDDSSGEEVVIPQKKGKKATATPAKKVVVSQTKKVAVPTPAKKAAVTPGKKAAATPAKKAVTPAKAVATPGKKGATQAKALVATPGKKGAVTPAKGAKNGKNAKKEDSDEDEDDDDDEDDSDEDEEDEEEDEFEPPVVKGKQGKVAAAAPASEDEDEEEDEEEEEEDEEEEDDSEEEEAMEITPAKGKKAPAKVVPVKAKNVAEEDDDDEEEDEDEEEDEEEEEDEEEEEEEEEEEPVKPAPGKRKKEMTKQKEVPEAKKQKVEGSESTTPFNLFIGNLNPNKSVAELKVAISEPFAKNDLAVVDVRTGTNRKFGYVDFESAEDLEKALELTGLKVFGNEIKLEKPKGRDSKKVRAARTLLAKNLSFNITEDELKEVFEDALEIRLVSQDGKSKGIAYIEFKSEADAEKNLEEKQGAEIDGRSVSLYYTGEKGQRQERTGKNSTWSGESKTLVLSNLSYSATEETLQEVFEKATFIKVPQNQQGKSKGYAFIEFASFEDAKEALNSCNKMEIEGRTIRLELQGPRGSPNARSQPSKTLFVKGLSEDTTEETLKESFEGSVRARIVTDRETGSSKGFGFVDFNSEEDAKAAKEAMEDGEIDGNKVTLDWAKPKGEGGFGGRGGGRGGFGGRGGGRGGGRGGFGGRGRGGFGGRGGFRGGRGGGGGGGDFKPQGKKTKFE.

The interval 1-303 (MVKLAKAGKT…AKKQKVEGSE (303 aa)) is disordered. N6-acetyllysine is present on residues K9, K15, and K16. The span at 24–42 (VEEDSEDEEMSEEEDDSSG) shows a compositional bias: acidic residues. S28, S34, S40, and S41 each carry phosphoserine. The segment covering 55–106 (ATATPAKKVVVSQTKKVAVPTPAKKAAVTPGKKAAATPAKKAVTPAKAVATP) has biased composition (low complexity). Repeat 1 spans residues 57 to 64 (ATPAKKVV). Residues 57-134 (ATPAKKVVVS…GAVTPAKGAK (78 aa)) form an 8 X 8 AA tandem repeats of X-T-P-X-K-K-X-X region. Position 66 is a phosphoserine (S66). Phosphothreonine occurs at positions 68, 75, 83, and 91. 3 consecutive repeat copies span residues 74 to 81 (PTPAKKAA), 82 to 89 (VTPGKKAA), and 90 to 97 (ATPAKKAV). At K95 the chain carries N6-acetyllysine. At T98 the chain carries Phosphothreonine. One copy of the 5; truncated repeat lies at 98–103 (TPAKAV). At K101 the chain carries N6-acetyllysine. The stretch at 104-111 (ATPGKKGA) is repeat 6. T105 bears the Phosphothreonine mark. At K108 the chain carries N6-acetyllysine. The residue at position 112 (T112) is a Phosphothreonine. K115 carries the N6-acetyllysine modification. Repeat copies occupy residues 119-126 (ATPGKKGA) and 127-134 (VTPAKGAK). T120 carries the phosphothreonine modification. Residue K123 is modified to N6-acetyllysine. Phosphoserine occurs at positions 144 and 157. Over residues 144–170 (SDEDEDDDDDEDDSDEDEEDEEEDEFE) the composition is skewed to acidic residues. The segment covering 171-187 (PPVVKGKQGKVAAAAPA) has biased composition (low complexity). The residue at position 188 (S188) is a Phosphoserine. Over residues 188 to 216 (SEDEDEEEDEEEEEEDEEEEDDSEEEEAM) the composition is skewed to acidic residues. T219 is modified (phosphothreonine). The span at 240-272 (EEDDDDEEEDEDEEEDEEEEEDEEEEEEEEEEE) shows a compositional bias: acidic residues. Residues 285–301 (MTKQKEVPEAKKQKVEG) show a composition bias toward basic and acidic residues. K298 participates in a covalent cross-link: Glycyl lysine isopeptide (Lys-Gly) (interchain with G-Cter in SUMO1); alternate. Residue K298 forms a Glycyl lysine isopeptide (Lys-Gly) (interchain with G-Cter in SUMO2); alternate linkage. The residue at position 302 (S302) is a Phosphoserine. RRM domains lie at 308–384 (FNLF…KPKG) and 394–467 (RTLL…YTGE). K319 is subject to N6-acetyllysine. A Glycyl lysine isopeptide (Lys-Gly) (interchain with G-Cter in SUMO1); alternate cross-link involves residue K325. A Glycyl lysine isopeptide (Lys-Gly) (interchain with G-Cter in SUMO2); alternate cross-link involves residue K325. K349 carries the post-translational modification N6-acetyllysine. Residue S357 is modified to Phosphoserine. Phosphothreonine is present on T368. K371 participates in a covalent cross-link: Glycyl lysine isopeptide (Lys-Gly) (interchain with G-Cter in SUMO2). K378 is covalently cross-linked (Glycyl lysine isopeptide (Lys-Gly) (interchain with G-Cter in SUMO2); alternate). N6-acetyllysine; alternate is present on K378. The residue at position 399 (K399) is an N6-acetyllysine. The residue at position 402 (S402) is a Phosphoserine. T406 is subject to Phosphothreonine. Residues K428 and K445 each carry the N6-acetyllysine modification. A phosphoserine mark is found at S459 and S461. Residues K468 and K477 each carry the N6-acetyllysine modification. Positions 486 to 560 (KTLVLSNLSY…RTIRLELQGP (75 aa)) constitute an RRM 3 domain. K513 participates in a covalent cross-link: Glycyl lysine isopeptide (Lys-Gly) (interchain with G-Cter in SUMO2); alternate. N6-acetyllysine; alternate is present on K513. K521 bears the N6-acetyllysine mark. Residue S563 is modified to Phosphoserine. Residue K572 is modified to N6-acetyllysine. The RRM 4 domain maps to 572–647 (KTLFVKGLSE…NKVTLDWAKP (76 aa)). Residue K577 forms a Glycyl lysine isopeptide (Lys-Gly) (interchain with G-Cter in SUMO2); alternate linkage. K577 carries the post-translational modification N6-acetyllysine; alternate. Position 580 is a phosphoserine (S580). Residue K589 forms a Glycyl lysine isopeptide (Lys-Gly) (interchain with G-Cter in SUMO1); alternate linkage. A Glycyl lysine isopeptide (Lys-Gly) (interchain with G-Cter in SUMO2); alternate cross-link involves residue K589. Residues S591 and S619 each carry the phosphoserine modification. K624 participates in a covalent cross-link: Glycyl lysine isopeptide (Lys-Gly) (interchain with G-Cter in SUMO2). Residues 642–714 (LDWAKPKGEG…KPQGKKTKFE (73 aa)) form a disordered region. At K646 the chain carries N6-acetyllysine. Positions 650–703 (EGGFGGRGGGRGGFGGRGGGRGGGRGGFGGRGRGGFGGRGGFRGGRGGGGGGGD) are enriched in gly residues. An asymmetric dimethylarginine mark is found at R656, R660, R666, R670, R674, R680, R682, R688, and R692. The residue at position 695 (R695) is an Asymmetric dimethylarginine; alternate. Residue R695 is modified to Omega-N-methylarginine; alternate.

Identified in a IGF2BP1-dependent mRNP granule complex containing untranslated mRNAs. Component of the SWAP complex that consists of NPM1, NCL/nucleolin, PARP1 and SWAP70. Component of a complex which is at least composed of HTATSF1/Tat-SF1, the P-TEFb complex components CDK9 and CCNT1, RNA polymerase II, SUPT5H, and NCL/nucleolin. Interacts with AICDA. Interacts with APTX. Interacts with C1QBP. Interacts with ERBB4. Interacts (via C-terminus) with FMR1 isoform 6 (via N-terminus). Interacts with GZF1; this interaction is important for nucleolar localization of GZF1. Interacts with NSUN2. Interacts with NVL. Interacts (via N-terminus domain) with SETX. Interacts (via RRM1 and C-terminal RRM4/Arg/Gly-rich domains) with TERT; the interaction is important for nucleolar localization of TERT. Interacts with WDR46. Interacts with ZFP36. Interacts with LRRC34. Interacts with RRP1B. Interacts with HNRNPU; this interaction occurs during mitosis. Interacts with RIOK1; RIOK1 recruits NCL to PRMT5 for symmetrically methylation. Interacts with ZBTB7B. Interacts with MDK; this interaction promotes NCL clustering and lateral movements of this complex into lipid rafts leading to MDK internalization. Interacts with HDGF. Interacts with ALKBH2. Interacts with IGFBP5; this interaction is necessary for IGFBP5 localization to the nucleus. Interacts with DDX24 (when ubiquitinated); this interaction may be important during ribosome biogenesis. Post-translationally, some glutamate residues are glycylated by TTLL8. This modification occurs exclusively on glutamate residues and results in a glycine chain on the gamma-carboxyl group. Symmetrically methylated by PRMT5.

It localises to the nucleus. It is found in the nucleolus. The protein localises to the cytoplasm. In terms of biological role, nucleolin is the major nucleolar protein of growing eukaryotic cells. It is found associated with intranucleolar chromatin and pre-ribosomal particles. It induces chromatin decondensation by binding to histone H1. It is thought to play a role in pre-rRNA transcription and ribosome assembly. May play a role in the process of transcriptional elongation. Binds RNA oligonucleotides with 5'-UUAGGG-3' repeats more tightly than the telomeric single-stranded DNA 5'-TTAGGG-3' repeats. This Mesocricetus auratus (Golden hamster) protein is Nucleolin (NCL).